A 355-amino-acid chain; its full sequence is UDP-N-acetylglucosamine--N-acetylmuramyl-(pentapeptide) pyrophosphoryl-undecaprenol N-acetylglucosamine transferase (355 aa).

Residues 15-17, asparagine 127, arginine 163, serine 191, isoleucine 244, 263-268, and glutamine 288 contribute to the UDP-N-acetyl-alpha-D-glucosamine site; these read TGG and ALTVSE.

This sequence belongs to the glycosyltransferase 28 family. MurG subfamily.

The protein localises to the cell inner membrane. The enzyme catalyses di-trans,octa-cis-undecaprenyl diphospho-N-acetyl-alpha-D-muramoyl-L-alanyl-D-glutamyl-meso-2,6-diaminopimeloyl-D-alanyl-D-alanine + UDP-N-acetyl-alpha-D-glucosamine = di-trans,octa-cis-undecaprenyl diphospho-[N-acetyl-alpha-D-glucosaminyl-(1-&gt;4)]-N-acetyl-alpha-D-muramoyl-L-alanyl-D-glutamyl-meso-2,6-diaminopimeloyl-D-alanyl-D-alanine + UDP + H(+). The protein operates within cell wall biogenesis; peptidoglycan biosynthesis. Its function is as follows. Cell wall formation. Catalyzes the transfer of a GlcNAc subunit on undecaprenyl-pyrophosphoryl-MurNAc-pentapeptide (lipid intermediate I) to form undecaprenyl-pyrophosphoryl-MurNAc-(pentapeptide)GlcNAc (lipid intermediate II). In Escherichia coli O9:H4 (strain HS), this protein is UDP-N-acetylglucosamine--N-acetylmuramyl-(pentapeptide) pyrophosphoryl-undecaprenol N-acetylglucosamine transferase.